The sequence spans 414 residues: Schlafen-like protein 1 (414 aa).

Positions 141–203 are disordered; the sequence is LHHREQDDSG…ISQNRPSGVR (63 aa). The segment covering 154-185 has biased composition (pro residues); sequence SHSPGPSPGPSPGPSPGFRRPPLPQLADPPPN. 268-275 is an ATP binding site; sequence GVEDSGLV. A coiled-coil region spans residues 373–407; the sequence is RQKWTAELSKLEEKVDVLTLEKEQLQEQLRQRQTL.

Belongs to the Schlafen family. Subgroup I subfamily.

This chain is Schlafen-like protein 1 (Slfnl1), found in Rattus norvegicus (Rat).